The following is a 254-amino-acid chain: Diphthine synthase (254 aa).

Residues leucine 11, aspartate 86, isoleucine 89, 114 to 115 (SV), leucine 166, leucine 207, and histidine 232 each bind S-adenosyl-L-methionine.

It belongs to the diphthine synthase family. As to quaternary structure, homodimer.

The enzyme catalyses 2-[(3S)-amino-3-carboxypropyl]-L-histidyl-[translation elongation factor 2] + 3 S-adenosyl-L-methionine = diphthine-[translation elongation factor 2] + 3 S-adenosyl-L-homocysteine + 3 H(+). The protein operates within protein modification; peptidyl-diphthamide biosynthesis. Functionally, S-adenosyl-L-methionine-dependent methyltransferase that catalyzes the trimethylation of the amino group of the modified target histidine residue in translation elongation factor 2 (EF-2), to form an intermediate called diphthine. The three successive methylation reactions represent the second step of diphthamide biosynthesis. In Sulfurisphaera tokodaii (strain DSM 16993 / JCM 10545 / NBRC 100140 / 7) (Sulfolobus tokodaii), this protein is Diphthine synthase.